Consider the following 404-residue polypeptide: uncharacterized protein (404 aa).

Transmembrane regions (helical) follow at residues 16–36, 49–69, 79–99, 110–130, 133–153, 166–186, 221–241, 252–272, 283–303, 307–327, 342–362, and 364–384; these read FAFF…QPLM, AASL…LVFG, PIMG…AFSP, IQGV…GEEI, GSLG…AVFG, WHMA…IFFI, FLIG…IVYV, AFSS…SFIG, ILVM…NNML, ILGI…ASSW, LYLF…GLFW, and GFHW…ALWL.

It belongs to the major facilitator superfamily.

The protein localises to the cell membrane. This is an uncharacterized protein from Bacillus subtilis (strain 168).